The primary structure comprises 381 residues: ELMO domain-containing protein 3 (381 aa).

The ELMO domain maps to 170 to 324 (THGRVLQTIY…DLEALAKKSP (155 aa)).

Both isoform 1 and isoform 2 are widely expressed.

The protein localises to the cell projection. The protein resides in the stereocilium. It localises to the kinocilium. Its subcellular location is the cytoplasm. It is found in the cytoskeleton. In terms of biological role, acts as a GTPase-activating protein (GAP) for ARL2 with low specific activity. The protein is ELMO domain-containing protein 3 (Elmod3) of Mus musculus (Mouse).